We begin with the raw amino-acid sequence, 1097 residues long: Protein STICHEL-like 3 (1097 aa).

5 disordered regions span residues 1 to 22 (MTTTTTTTTRVASSSSTRNNRI), 74 to 168 (SLRD…YRIG), 220 to 293 (NVRP…GFGE), 321 to 358 (GRSLSCGMSDSKGGRKGETNERNGSDKMMIQSDDDSSS), and 400 to 436 (DSDLASEGRSGEKKHKKKSHVNARHRHRQQHQSLTEK). A compositionally biased stretch (polar residues) spans 10–20 (RVASSSSTRNN). The segment covering 95-113 (LPKKGDLVEGGRRSVDLKK) has biased composition (basic and acidic residues). The span at 126–136 (PVVNFGTSKVT) shows a compositional bias: polar residues. Residues 137 to 168 (PSDERSGPVSGERDSGRRVKREESSRKSYRIG) are compositionally biased toward basic and acidic residues. The span at 227 to 241 (YGGGGGGGNTRGCAG) shows a compositional bias: gly residues. Over residues 245 to 259 (RPKRRKFRGTRRVRG) the composition is skewed to basic residues. Basic and acidic residues-rich tracts occupy residues 281 to 291 (VEKHDGEKEGF) and 332 to 345 (KGGRKGETNERNGS). Over residues 346–358 (DKMMIQSDDDSSS) the composition is skewed to low complexity. The segment covering 411–429 (EKKHKKKSHVNARHRHRQQ) has biased composition (basic residues). An ATP-binding site is contributed by 472 to 479 (GPNGTGKT). Zn(2+) contacts are provided by C491, C500, C503, and C506. Positions 742–770 (KEDMEKLRQALKTLSEAEKQLRVSNDKLT) form a coiled coil. Disordered regions lie at residues 790-828 (SSTADTGGRESSDHHLDPSSDAAGGRSSGLDRRRGDSRK), 913-932 (DPRNNVHHHHHHPTVKDKSL), and 956-1003 (VTES…SQSI). 2 stretches are compositionally biased toward basic and acidic residues: residues 796–807 (GGRESSDHHLDP) and 818–828 (GLDRRRGDSRK). Residues 993-1003 (ASQSQNQSQSI) show a composition bias toward polar residues.

It belongs to the DnaX/STICHEL family.

The chain is Protein STICHEL-like 3 from Arabidopsis thaliana (Mouse-ear cress).